Consider the following 330-residue polypeptide: Malate dehydrogenase (330 aa).

Residue 13–19 (GAAGQIG) coordinates NAD(+). Substrate is bound by residues R94 and R100. NAD(+) is bound by residues N107, Q114, and 131-133 (VGN). Residues N133 and R164 each coordinate substrate. H189 functions as the Proton acceptor in the catalytic mechanism.

The protein belongs to the LDH/MDH superfamily. MDH type 2 family.

The catalysed reaction is (S)-malate + NAD(+) = oxaloacetate + NADH + H(+). Functionally, catalyzes the reversible oxidation of malate to oxaloacetate. This is Malate dehydrogenase from Deinococcus deserti (strain DSM 17065 / CIP 109153 / LMG 22923 / VCD115).